A 2593-amino-acid chain; its full sequence is MIDSTSHSNLRSKAFIFGPQDLSFDVRSFNKLHSQLQNHQWVLDALASLPKLWDNFAASDQKVQQSNTGKLLENLNAWISSGVAPEEAFPLPNVLLSPLVVIGQLVEYMTFLKAAFPDLGKKHDLPISIKEDTETFGLCTGTLCAFAVACSSNIADIQHYGAVAARLAMLVGAIVDTEEVLSDPEGKSVSFSASWNSAEFSDSFTHVLETFPDAYVSVIVDQRRATLTASKKTAPAIIERLKQEGAHVTSIALSGRFHWKKHQDAVSSLIQFCGLDPDLQLADATKMLLPSRSSSDGQYITTGKLHELALRAILLEQSEWYKTCRISYLSKFIMDDAAVICFGPERCMPPTLARKLGPRLTYVSEIDISSSRVPGQLLGGTQKLNLTDLPDERIAVIGMACRLPGAEDHEGFWEILKTGQSQHREVPEDRFGMATAWREADKRKWYGNFIDNYDTFDHKFFKKSPREMASTDPQHRLMLQVAYQAVEQSGYFRNNGTNRRIGCFMGVGNVDYEDNIACYPANAYSATGNLKSFLAGKISHHFGWTGPSLTLDTACSSSSVAIHQACRSILSGECNGALAGGVNVITSPNWYHNLAGASFLSPTGQCKPFDAKGDGYCRGEGVGAVFLKRLSSAIADGDQVFGVIASTKVYQNQNCTAITVPNAISLSELFTDVVRQARLEPKDITLVEAHGTGTAVGDPAEYDGIRAVFGGPIRSDVLSLGSVKGLVGHTECASGVVSLIKTLLMIQQGFIPPQASFSSINPSLNAKAEEKIEISTRLKPWDAPFRAALINNYGASGSNASMVVTQPPNLTETPSTPLPGKSYPFWISAFDQQSLQSYVRRLRQFLEKHAADKNLSVANLSFQVACQSNWSLPQALVFSASTKEELNRALASFEKGSTDFPSVQLPDPKPVILCFGGQVSTYVGLDQEVYNSTAILRHYLDQCDAMCLSLGLQSIYPAIFQRSPIEDIVQLQTALFAMQYSCAKAWIDSGLKVASVVGHSFGELIALCVSNAVSLKDAVKMISGRARLIKERWGADKGSMIAVEADLSDVEALLAKVKSQMGSETGLAIACYNASKSFTLAGPTKDVDHAENLLKNDPDFSGIRYKRLNVTNAFHSVLVDALIDDLESLGQGIRFKEPTIKLERATEQESTSTLNANYVATHMRKPVFFAQAVKRLSDKFPVAIWLEAGSNSTITAMASRALGTSNSSFQAVNITSEGAFRFLCDTTVKLWKEGQKVSFWAHHRLQTPMYTPVLLPPYQFEKSRHWMDLKVPPKPEASVQVAEQTAIIEAPKGLTTFVGYQDASQRSVRFRVNVTTEKFNRLLSGHIMANAAAVCPGMFQVEIALDALTSLRPEFQARSFIPELHDLRHYQPLVRDESRAVWIEAHCPNAEGLVWNWKLTASDDKGSGSVTHTSGTITFQAADSVQVKSEFEKLRRLIGRKRCLQLLDSNVADDILQGRNIYRAFTEVIDYKEIYRHVTKIAGRDNESAGRVIKTYDGETWLDTVLTDCFCQVAGIFVNLMTTKIDLSERGIFICDGIDRWLRAPNAGSNNTPSQVYEVFALHHCESDSKYLSDVFAFDAREGSLVEVALGISYQKVSISGIRRVLSKGMPAGLQPQVPTSPAAVAAIKTVSPPPVADSPLVDGSSTAVSGTPPTKKAPKAPSVDITGKMREIICNLSGLEPDEVKDDSDLVELGIDSLMSMELAREVDLAFKTTIDVTQLIDVTDFRSLVECMQRILGIDNQEDNTYLAEGLNGHEGVVTNGNAYHVNGTNGVVNGNGVLFPELGGSILPKSAILDAFRIAKEATDDFILNGQLGTYYNEVMPRSTELCVAHIVNAFEQLGCPIRSAAAYQRLERVPYLPKHERFMNLIYGLLEEARLIDINGSEITRTSVPVSTKSVETMLEELLHDEPLHAAEHKLTSLTGSKFADCITGKEDGLQLIFGSPEGREIVTDVYAKSPINAVWIQQAEFFLEQLVKRLPNTGEPLRILEMGAGTGGTTVKMLPLLERLGVPVEYTMTDLSSSLIAAARKRFKKYPFMKFKVVNIESPPDPQLVHSQHIILATNCVHATRNLEISTRNIHRILRPDGFLLLLEMTEQVPWVDFIFGLLEGWWLFEDGRRHALQPATHWKKILTSVGYGHVDWTEGTRPEANIQRLIIALASEPRYDHTPQSLQPPVQVPLTDIAGRQEIIDTYIREYTEDFRALPIPGIQQAVMPAPTGHCVLVTGATGSLGSHVVGYLSRLPNVHTVVCLNRRSTVPATIRQEEALKVRGISLDDNSRSKLVVLEVETAKPLLGLPVETYQKLVNTATHIVHSAWPMSLTRPIRGYESQFKVMQNLINLAREVAAWRPVPFKFSFQFISSIGVVGYYPLRYGEIIAPEETMTADSVLPVGYAEAKLVCERMLDETLHQYPDRFRPMAVRIAQIAGSTSNGHWNPVEHFAFLIKSSQTLKALPDFDGSLSWCPVDDVSATLGELLISNTTPYSIYHIENPSRQQWRKMVKTLAQSLDIPRDGIIPFDQWIERVRNSSASINDNPARQLLEFFDQHFIRMSCGNLILDTTKTREHSATLRERGPVGPGLVEKYISAWKTMGFLD.

The N-terminal acylcarrier protein transacylase domain (SAT) stretch occupies residues 70–224 (KLLENLNAWI…YVSVIVDQRR (155 aa)). The active-site Nucleophile; for transacylase activity is cysteine 139. The active-site Proton donor/acceptor; for transacylase activity is the histidine 258. The region spanning 391 to 806 (DERIAVIGMA…GSNASMVVTQ (416 aa)) is the Ketosynthase family 3 (KS3) domain. Active-site for beta-ketoacyl synthase activity residues include cysteine 555, histidine 690, and histidine 729. A malonyl-CoA:ACP transacylase (MAT) domain region spans residues 906 to 1191 (PDPKPVILCF…VAIWLEAGSN (286 aa)). The tract at residues 1291–1424 (PKGLTTFVGY…GTITFQAADS (134 aa)) is N-terminal hotdog fold. A PKS/mFAS DH domain is found at 1291 to 1603 (PKGLTTFVGY…YQKVSISGIR (313 aa)). A product template (PT) domain region spans residues 1322–1601 (LLSGHIMANA…ISYQKVSISG (280 aa)). The Proton acceptor; for dehydratase activity role is filled by histidine 1326. The C-terminal hotdog fold stretch occupies residues 1451–1603 (VADDILQGRN…YQKVSISGIR (153 aa)). The Proton donor; for dehydratase activity role is filled by aspartate 1508. The tract at residues 1636-1662 (VADSPLVDGSSTAVSGTPPTKKAPKAP) is disordered. One can recognise a Carrier domain in the interval 1661–1738 (APSVDITGKM…SLVECMQRIL (78 aa)). An O-(pantetheine 4'-phosphoryl)serine modification is found at serine 1689. Catalysis depends on for methyltransferase activity residues tyrosine 1955, histidine 2067, and glutamate 2093. Residues 1960 to 2134 (INAVWIQQAE…ATHWKKILTS (175 aa)) form a methyltransferase (CMeT) domain region. The interval 2215 to 2459 (PAPTGHCVLV…KALPDFDGSL (245 aa)) is NADPH-binding (R) domain.

The cofactor is pantetheine 4'-phosphate.

The protein operates within mycotoxin biosynthesis. Non-reducing polyketide synthase; part of the gene cluster that mediates the biosynthesis of the mycotoxin citrinin, a hepato-nephrotoxic compound to humans due to inhibition of respiration complex III. The pathway begins with the synthesis of a keto-aldehyde intermediate by the citrinin PKS (pksCT) from successive condensations of 4 malonyl-CoA units, presumably with a simple acetyl-CoA starter unit. Release of the keto-aldehyde intermediate is consistent with the presence of the C-terminal reductive release domain. Mp11 collaborates with pksCT by catalyzing the hydrolysis of ACP-bound acyl intermediates to free the ACP from stalled intermediates. Mpl2 then catalyzes the oxidation of the C-12 methyl of the ketone intermediate to an alcohol intermediate which is further oxidized by the oxidoreductase mpl7 to produce a bisaldehyde intermediate. The fourth catalytic step is catalyzed by the mpl4 aldehyde dehydrogenase. The final transformation is the reduction of C-3 by mpl6 to provide the chemically stable citrinin nucleus. This chain is Citrinin polyketide synthase, found in Monascus purpureus (Red mold).